The following is a 452-amino-acid chain: Probable cysteine protease RD21C (452 aa).

Residues 1–29 (MATSIKSITLALLIFSVLLISLSLGSVTA) form the signal peptide. Residues 30–128 (TETTRNEAEA…EKYLYKVGDS (99 aa)) constitute a propeptide, activation peptide. An N-linked (GlcNAc...) asparagine glycan is attached at asparagine 82. 5 cysteine pairs are disulfide-bonded: cysteine 150–cysteine 192, cysteine 184–cysteine 226, cysteine 284–cysteine 335, cysteine 363–cysteine 375, and cysteine 369–cysteine 390. Cysteine 153 is an active-site residue. Active-site residues include histidine 290 and asparagine 310. The propeptide at 346–452 (KSSGSNPPKP…KSTNMLVGSA (107 aa)) is removed in mature form.

The protein belongs to the peptidase C1 family. As to quaternary structure, interacts with WSCP.

Functionally, probable thiol protease. The protein is Probable cysteine protease RD21C of Arabidopsis thaliana (Mouse-ear cress).